The primary structure comprises 275 residues: 4-diphosphocytidyl-2-C-methyl-D-erythritol kinase (275 aa).

Residue Lys-14 is part of the active site. 98 to 108 (PMGAGLGGGSS) contacts ATP. Asp-140 is an active-site residue.

The protein belongs to the GHMP kinase family. IspE subfamily.

The catalysed reaction is 4-CDP-2-C-methyl-D-erythritol + ATP = 4-CDP-2-C-methyl-D-erythritol 2-phosphate + ADP + H(+). It functions in the pathway isoprenoid biosynthesis; isopentenyl diphosphate biosynthesis via DXP pathway; isopentenyl diphosphate from 1-deoxy-D-xylulose 5-phosphate: step 3/6. Catalyzes the phosphorylation of the position 2 hydroxy group of 4-diphosphocytidyl-2C-methyl-D-erythritol. This is 4-diphosphocytidyl-2-C-methyl-D-erythritol kinase from Francisella tularensis subsp. tularensis (strain WY96-3418).